The following is a 533-amino-acid chain: 1-aminocyclopropane-1-carboxylate synthase 5 (533 aa).

Position 358 is an N6-(pyridoxal phosphate)lysine (lysine 358).

Belongs to the class-I pyridoxal-phosphate-dependent aminotransferase family. Pyridoxal 5'-phosphate serves as cofactor. Expressed in shoots and leaf blades. Expressed at low levels in leaf sheaths. Expressed in vasculature of roots and shoots.

It catalyses the reaction S-adenosyl-L-methionine = 1-aminocyclopropane-1-carboxylate + S-methyl-5'-thioadenosine + H(+). Its pathway is alkene biosynthesis; ethylene biosynthesis via S-adenosyl-L-methionine; ethylene from S-adenosyl-L-methionine: step 1/2. Its function is as follows. Catalyzes the formation of 1-aminocyclopropane-1-carboxylate, a direct precursor of ethylene in higher plants. In Oryza sativa subsp. japonica (Rice), this protein is 1-aminocyclopropane-1-carboxylate synthase 5.